Consider the following 173-residue polypeptide: Acetyl-CoA decarbonylase/synthase complex subunit epsilon (173 aa).

The protein belongs to the CdhB family. As to quaternary structure, heterotetramer of two alpha and two epsilon subunits. The ACDS complex is made up of alpha, epsilon, beta, gamma and delta subunits with a probable stoichiometry of (alpha(2)epsilon(2))(4)-beta(8)-(gamma(1)delta(1))(8).

The protein operates within one-carbon metabolism; methanogenesis from acetate. In terms of biological role, part of a complex that catalyzes the reversible cleavage of acetyl-CoA, allowing growth on acetate as sole source of carbon and energy. The alpha-epsilon subcomponent functions as a carbon monoxide dehydrogenase. The precise role of the epsilon subunit is unclear; it may have a stabilizing role within the alpha(2)epsilon(2) component and/or be involved in electron transfer to FAD during a potential FAD-mediated CO oxidation. The protein is Acetyl-CoA decarbonylase/synthase complex subunit epsilon of Methanothermobacter thermautotrophicus (strain ATCC 29096 / DSM 1053 / JCM 10044 / NBRC 100330 / Delta H) (Methanobacterium thermoautotrophicum).